The primary structure comprises 567 residues: Multidrug and toxin extrusion protein 1 (567 aa).

Met1 is modified (N-acetylmethionine). Residues 1 to 37 (MERTEESAPGPGGADAASERRGLRCLLLPGFLEELRA) lie on the Cytoplasmic side of the membrane. Ser18 bears the Phosphoserine mark. Residues 38 to 58 (LLVLAGPAFLAQLMMFLISFI) traverse the membrane as a helical segment. The Extracellular segment spans residues 59–72 (SSVFCGHLGKLELD). Residues 73–93 (AVTLAIAVINVTGISVGHGLS) traverse the membrane as a helical segment. Residues 94–120 (SACDTLISQTYGSQNLKHVGVILQRGT) are Cytoplasmic-facing. A helical membrane pass occupies residues 121-141 (LILLLCCFPCWALFINTEQIL). Topologically, residues 142 to 152 (LLFRQDPDVSR) are extracellular. Residues 153-173 (LTQTYVMIFIPALPAAFLYTL) traverse the membrane as a helical segment. Residues 174-187 (QVKYLLNQGIVLPQ) are Cytoplasmic-facing. A helical membrane pass occupies residues 188–208 (IMTGIAANLVNALANYVFLYH). The Extracellular segment spans residues 209 to 216 (LHLGVMGS). A helical membrane pass occupies residues 217–237 (ALANTISQFALAIFLFLYILW). Residues 238–257 (RRLHQATWGGWSWECLQDWA) are Cytoplasmic-facing. The helical transmembrane segment at 258–277 (SFLRLAIPSMLMLCIEWWAY) threads the bilayer. Residues 278-295 (EVGSFLSGILGMVELGAQ) are Extracellular-facing. A helical membrane pass occupies residues 296–316 (SITYELAIIVYMIPSGFSVAA). At 317–336 (NVRVGNALGAGNIDQAKKSS) the chain is on the cytoplasmic side. A helical transmembrane segment spans residues 337 to 357 (AISLIVTELFAVTFCVLLLGC). At 358–370 (KDLVGYIFTTDRD) the chain is on the extracellular side. A helical membrane pass occupies residues 371–391 (IVALVAQVIPIYAVSHLFEGL). At 392–408 (ACTCGGILRGTGNQKVG) the chain is on the cytoplasmic side. The helical transmembrane segment at 409 to 429 (AIVNAIGYYVIGLPIGIALMF) threads the bilayer. Over 430-437 (AAKLGVIG) the chain is Extracellular. Residues 438–458 (LWSGIIICTTCQTTCFLAFIA) form a helical membrane-spanning segment. Over 459 to 543 (RLNWKRACQQ…LSGKQLALRR (85 aa)) the chain is Cytoplasmic. The chain crosses the membrane as a helical span at residues 544–564 (GLLLLGVVLVLVGGILVRVYI). At 565 to 567 (RIE) the chain is on the extracellular side.

Belongs to the multi antimicrobial extrusion (MATE) (TC 2.A.66.1) family. As to expression, predominantly expressed in kidney and liver. Also expressed in various cells, including brain glia-like cells and capillaries, pancreatic duct cells, urinary bladder epithelium, adrenal gland cortex, heart, stomach, small intestine, thyroid gland, testes, alpha cells of the islets of Langerhans, Leydig cells, and vitamin A-storing Ito cells. Expressed in heart, stomach, small intestine, bladder, thyroid gland, adrenal gland and testes (at protein level).

Its subcellular location is the cell membrane. The protein resides in the apical cell membrane. The catalysed reaction is thiamine(out) + H(+)(in) = thiamine(in) + H(+)(out). It carries out the reaction estrone 3-sulfate(in) + H(+)(out) = estrone 3-sulfate(out) + H(+)(in). The enzyme catalyses creatinine(in) + H(+)(out) = creatinine(out) + H(+)(in). It catalyses the reaction agmatine(in) + H(+)(out) = agmatine(out) + H(+)(in). Multidrug efflux pump that functions as a H(+)/organic cation antiporter. Plays a physiological role in the excretion of cationic compounds including endogenous metabolites, drugs, toxins through the kidney and liver, into urine and bile respectively. Mediates the efflux of endogenous compounds such as creatinine, vitamin B1/thiamine, agmatine and estrone-3-sulfate. May also contribute to regulate the transport of cationic compounds in testis across the blood-testis-barrier. The polypeptide is Multidrug and toxin extrusion protein 1 (Slc47a1) (Mus musculus (Mouse)).